A 204-amino-acid polypeptide reads, in one-letter code: Casparian strip membrane protein 2 (204 aa).

Topologically, residues 1-42 are cytoplasmic; it reads MKNESTTIDVPAESSSAMKGKAPLIGVARDHTTSGSGGYNRG. Residues 43–63 traverse the membrane as a helical segment; the sequence is LSIFDFLLRLAAIVAALAAAA. Over 64 to 92 the chain is Extracellular; sequence TMGTSDETLPFFTQFLQFEASYDDLPTFQ. Residues 93 to 113 traverse the membrane as a helical segment; it reads FFVIAMALVGGYLVLSLPISV. The Cytoplasmic segment spans residues 114–125; that stretch reads VTILRPLATAPR. The helical transmembrane segment at 126–146 threads the bilayer; the sequence is LLLLVLDTAVLALNTAAASSA. Residues 147 to 178 are Extracellular-facing; it reads AAISYLAHSGNQNTNWLPICQQFGDFCQKSSG. The chain crosses the membrane as a helical span at residues 179–199; the sequence is AVVSAFISVVFFTILVVISGV. Residues 200-204 lie on the Cytoplasmic side of the membrane; it reads ALKRH.

The protein belongs to the Casparian strip membrane proteins (CASP) family. As to quaternary structure, homodimer and heterodimers.

It is found in the cell membrane. In terms of biological role, regulates membrane-cell wall junctions and localized cell wall deposition. Required for establishment of the Casparian strip membrane domain (CSD) and the subsequent formation of Casparian strips, a cell wall modification of the root endodermis that determines an apoplastic barrier between the intraorganismal apoplasm and the extraorganismal apoplasm and prevents lateral diffusion. This chain is Casparian strip membrane protein 2, found in Arabidopsis lyrata subsp. lyrata (Lyre-leaved rock-cress).